The primary structure comprises 2856 residues: Lipopolysaccharide-responsive and beige-like anchor protein (2856 aa).

Disordered stretches follow at residues 1-35 (MASEDNRAPSRPPTGDDGGGGGKEETPTEGGALSL) and 939-1107 (EQRK…DDDY). Residue Ala-2 is modified to N-acetylalanine. Residues Ser-10, Ser-979, and Ser-1003 each carry the phosphoserine modification. The segment covering 991-1009 (ENSSIGRASSIDSASNTEL) has biased composition (polar residues). Residues 1010 to 1026 (QTHDMSSDEKKVERENQ) are compositionally biased toward basic and acidic residues. Positions 1073-1082 (SEVSASISSP) are enriched in low complexity. 8 positions are modified to phosphoserine: Ser-1097, Ser-1132, Ser-1136, Ser-1219, Ser-1221, Ser-1228, Ser-1244, and Ser-1258. The disordered stretch occupies residues 1253–1296 (FELKASTSTEAPQPQRHGLEISRQQEQTAQGTAPDAVDQQRRDS). The span at 1274-1283 (SRQQEQTAQG) shows a compositional bias: polar residues. The WD 1 repeat unit spans residues 1298–1340 (STMFRIPEFKWSQMHQRLLTDLLFSIETDIQMWRSHSTKTVMD). 2 positions are modified to phosphoserine: Ser-1487 and Ser-1497. Residues 1529-1545 (AQFLALAVVYFISVLMV) form a helical membrane-spanning segment. Disordered regions lie at residues 1556-1621 (DERH…LGSG) and 1750-1778 (SAVSVVSSVDPTHASDTGGESPGSRSPKC). Positions 1563–1573 (LKETSSDNGNA) are enriched in polar residues. The span at 1586 to 1601 (SSLTLSSVEESLEGTS) shows a compositional bias: low complexity. A phosphoserine mark is found at Ser-1608, Ser-1770, Ser-1773, and Ser-2057. One can recognise a BEACH-type PH domain in the interval 2066 to 2174 (NLAGPVSLST…TVKKVVNYLP (109 aa)). One can recognise a BEACH domain in the interval 2193-2482 (ATPRQLFKAS…QLLIEPHPPR (290 aa)). Ser-2489 is subject to Phosphoserine. WD repeat units lie at residues 2584–2626 (DQSI…LIQV), 2629–2672 (GHWD…SGIG), 2688–2728 (GHDY…RTLE), 2770–2809 (ETDDHIRAIQLSRDGQYLLTGGDNGVVIVRQVSDLKQLFA), and 2812–2851 (GCDAGIRAMALSFDQRCIISGMASGSIVLFYNDFNRWHHE).

In terms of assembly, interacts with TOM1 and TOLLIP. As to expression, isoform 1 is expressed in the brain, is absent from the lung and the bone marrow and is less abundant in the spleen. Isoform 2 is expressed in the spleen, lung, brain and bone marrow. Isoform 3 is expressed in the brain, is absent from the bone marrow and is less abundant in the spleen and lung.

The protein resides in the cell membrane. Its subcellular location is the endoplasmic reticulum membrane. The protein localises to the golgi apparatus. It localises to the trans-Golgi network membrane. It is found in the lysosome membrane. In terms of biological role, involved in coupling signal transduction and vesicle trafficking to enable polarized secretion and/or membrane deposition of immune effector molecules. Involved in phagophore growth during mitophagy by regulating ATG9A trafficking to mitochondria. This Mus musculus (Mouse) protein is Lipopolysaccharide-responsive and beige-like anchor protein (Lrba).